The following is a 722-amino-acid chain: Polyribonucleotide nucleotidyltransferase (722 aa).

Mg(2+) is bound by residues Asp-495 and Asp-501. Residues 562–621 (PRLLSFRIDPELIGTVIGPGGRTIKGITERTNTKIDIEDGGIVTIASHDGVAAEEAQKII) form the KH domain. Residues 631–699 (GEIFTGSITR…NRGRINLTLR (69 aa)) enclose the S1 motif domain. The span at 701–711 (VSQNNNDMNYP) shows a compositional bias: polar residues. The disordered stretch occupies residues 701–722 (VSQNNNDMNYPQPTPTPVAPLN). Pro residues predominate over residues 712–722 (QPTPTPVAPLN).

It belongs to the polyribonucleotide nucleotidyltransferase family. It depends on Mg(2+) as a cofactor.

The protein resides in the cytoplasm. It catalyses the reaction RNA(n+1) + phosphate = RNA(n) + a ribonucleoside 5'-diphosphate. In terms of biological role, involved in mRNA degradation. Catalyzes the phosphorolysis of single-stranded polyribonucleotides processively in the 3'- to 5'-direction. The protein is Polyribonucleotide nucleotidyltransferase of Prochlorococcus marinus (strain MIT 9211).